Reading from the N-terminus, the 503-residue chain is Cardiolipin synthase (503 aa).

Helical transmembrane passes span 5–25 (LNVL…RGFL), 30–50 (VGTL…IIFF), and 59–79 (LTWL…YLMF). PLD phosphodiesterase domains are found at residues 238–265 (INYR…GDEY) and 416–443 (NRGF…DMRS). Catalysis depends on residues H243, K245, D250, H421, K423, and D428.

This sequence belongs to the phospholipase D family. Cardiolipin synthase subfamily.

It localises to the cell membrane. It catalyses the reaction 2 a 1,2-diacyl-sn-glycero-3-phospho-(1'-sn-glycerol) = a cardiolipin + glycerol. In terms of biological role, catalyzes the reversible phosphatidyl group transfer from one phosphatidylglycerol molecule to another to form cardiolipin (CL) (diphosphatidylglycerol) and glycerol. In Alkalihalophilus pseudofirmus (strain ATCC BAA-2126 / JCM 17055 / OF4) (Bacillus pseudofirmus), this protein is Cardiolipin synthase (cls).